The following is a 68-amino-acid chain: TxMMSK-03 (68 aa).

The N-terminal stretch at 1–19 (MSKLGALLIICLLLFPLTA) is a signal peptide. Residues 20–50 (VPMDGDQPADRPAERMQDDISFEQHPMFDAT) constitute a propeptide that is removed on maturation. 3 disulfide bridges follow: cysteine 53-cysteine 67, cysteine 54-cysteine 63, and cysteine 59-cysteine 66. Proline 65 carries the 4-hydroxyproline; partial modification.

Post-translationally, contains 3 disulfide bonds. In terms of tissue distribution, expressed by the venom duct. Both hydroxylated and non-hydroxylated forms are mostly and only present in part 2 (proximal of the venom bulb) of the venom duct, respectively.

Its subcellular location is the secreted. The protein is TxMMSK-03 of Conus textile (Cloth-of-gold cone).